Here is a 135-residue protein sequence, read N- to C-terminus: Cofilin-4 (135 aa).

The region spanning 3–135 (SCASINDEVI…SQSLVEERCK (133 aa)) is the ADF-H domain.

This sequence belongs to the actin-binding proteins ADF family.

It localises to the cytoplasm. It is found in the cytoskeleton. Functionally, controls actin polymerization and depolymerization. This is Cofilin-4 (cofE) from Dictyostelium discoideum (Social amoeba).